The sequence spans 231 residues: Platelet-activating factor acetylhydrolase IB subunit alpha1 (231 aa).

Serine 2 is modified (N-acetylserine). Position 2 is a phosphoserine (serine 2). Catalysis depends on residues serine 47, aspartate 192, and histidine 195.

It belongs to the 'GDSL' lipolytic enzyme family. Platelet-activating factor acetylhydrolase IB beta/gamma subunits subfamily. As to quaternary structure, forms a catalytic dimer which is either homodimer (alpha1/alpha1 homodimer) or heterodimer with PAFAH1B2 (alpha1/alpha2 heterodimer). Component of the cytosolic (PAF-AH (I)) heterotetrameric enzyme, which is composed of PAFAH1B1 (beta), PAFAH1B2 (alpha2) and PAFAH1B3 (alpha1) subunits. The catalytic activity of the enzyme resides in the alpha1 (PAFAH1B3) and alpha2 (PAFAH1B2) subunits, whereas the beta subunit (PAFAH1B1) has regulatory activity. Trimer formation is not essential for the catalytic activity. Interacts with VLDLR; this interaction may modulate the Reelin pathway. In the adult, expressed in brain, skeletal muscle, kidney, thymus, spleen, colon, testis, ovary and peripheral blood leukocytes. In the fetus, highest expression occurs in brain.

It is found in the cytoplasm. It carries out the reaction a 1-O-alkyl-2-acetyl-sn-glycero-3-phosphocholine + H2O = a 1-O-alkyl-sn-glycero-3-phosphocholine + acetate + H(+). It catalyses the reaction 1-O-hexadecyl-2-acetyl-sn-glycero-3-phosphocholine + H2O = 1-O-hexadecyl-sn-glycero-3-phosphocholine + acetate + H(+). The enzyme catalyses 1-O-hexadecyl-2-acetyl-sn-glycero-3-phosphate + H2O = 1-O-hexadecyl-sn-glycero-3-phosphate + acetate + H(+). Beta subunit (PAFAH1B1) inhibits the acetylhydrolase activity of the alpha1/alpha1 catalytic homodimer. In terms of biological role, alpha1 catalytic subunit of the cytosolic type I platelet-activating factor (PAF) acetylhydrolase (PAF-AH (I)) heterotetrameric enzyme that catalyzes the hydrolyze of the acetyl group at the sn-2 position of PAF and its analogs and modulates the action of PAF. The activity and substrate specificity of PAF-AH (I) are affected by its subunit composition. Both alpha1/alpha1 homodimer (PAFAH1B3/PAFAH1B3 homodimer) and alpha1/alpha2 heterodimer(PAFAH1B3/PAFAH1B2 heterodimer) hydrolyze 1-O-alkyl-2-acetyl-sn-glycero-3-phosphoric acid (AAGPA) more efficiently than PAF, but they have little hydrolytic activity towards 1-O-alkyl-2-acetyl-sn-glycero-3-phosphorylethanolamine (AAGPE). Plays an important role during the development of brain. This chain is Platelet-activating factor acetylhydrolase IB subunit alpha1, found in Homo sapiens (Human).